Here is a 370-residue protein sequence, read N- to C-terminus: Quinolinate synthase (370 aa).

Residues His-62 and Ser-83 each contribute to the iminosuccinate site. Cys-128 serves as a coordination point for [4Fe-4S] cluster. Residues 154–156 (YAN) and Ser-171 contribute to the iminosuccinate site. Position 215 (Cys-215) interacts with [4Fe-4S] cluster. Iminosuccinate contacts are provided by residues 241–243 (HPE) and Thr-258. [4Fe-4S] cluster is bound at residue Cys-312.

It belongs to the quinolinate synthase family. Type 1 subfamily. Requires [4Fe-4S] cluster as cofactor.

The protein localises to the cytoplasm. The catalysed reaction is iminosuccinate + dihydroxyacetone phosphate = quinolinate + phosphate + 2 H2O + H(+). The protein operates within cofactor biosynthesis; NAD(+) biosynthesis; quinolinate from iminoaspartate: step 1/1. In terms of biological role, catalyzes the condensation of iminoaspartate with dihydroxyacetone phosphate to form quinolinate. This chain is Quinolinate synthase, found in Neisseria meningitidis serogroup A / serotype 4A (strain DSM 15465 / Z2491).